Consider the following 314-residue polypeptide: Malate dehydrogenase (314 aa).

NAD(+)-binding positions include 11 to 16 and Asp35; that span reads GSGNIG. 2 residues coordinate substrate: Arg84 and Arg90. NAD(+) contacts are provided by residues Asn97 and 120–122; that span reads ITN. Substrate-binding residues include Asn122 and Arg153. His177 functions as the Proton acceptor in the catalytic mechanism.

This sequence belongs to the LDH/MDH superfamily. MDH type 3 family.

It carries out the reaction (S)-malate + NAD(+) = oxaloacetate + NADH + H(+). Catalyzes the reversible oxidation of malate to oxaloacetate. This Rickettsia prowazekii (strain Madrid E) protein is Malate dehydrogenase.